An 807-amino-acid polypeptide reads, in one-letter code: Serine/threonine-protein kinase B-raf (807 aa).

2 stretches are compositionally biased toward low complexity: residues 1–15 (MAALSSGSSAEGASL) and 110–128 (SVSSSASTDTVASSSSSSL). Disordered stretches follow at residues 1–36 (MAALSSGSSAEGASLFNGDMEPEPPPPVLGACYAGS) and 104–128 (GNGTDFSVSSSASTDTVASSSSSSL). Positions 155-227 (PIVRVFLPNK…TGEELHVEVL (73 aa)) constitute an RBD domain. Residues 234–280 (THNFVRKTFFTLAFCDFCRKLLFQGFRCQTCGYKFHQRCSTEVPLMC) form a Phorbol-ester/DAG-type zinc finger. Residues His-235, Cys-248, Cys-251, Cys-261, Cys-264, His-269, Cys-272, and Cys-280 each contribute to the Zn(2+) site. The segment covering 303-313 (EETTLGETTPA) has biased composition (polar residues). Disordered regions lie at residues 303–372 (EETT…VHIN) and 434–494 (STAG…EIPD). Residues 314–328 (SGSYPSVPPSDSVGP) are compositionally biased toward low complexity. Composition is skewed to basic and acidic residues over residues 348–363 (PADEDHRNQFGQRDRS) and 463–487 (QRERKSSSSSEDRNRMKTLGRRDSS). A Protein kinase domain is found at 497 to 757 (ITVGQRIGSG…PQILASIELL (261 aa)). Residues 503 to 511 (IGSGSFGTV) and Lys-523 each bind ATP. Asp-616 (proton acceptor) is an active-site residue. Position 790 is a phosphoserine; by MAPK1 (Ser-790). At Thr-793 the chain carries Phosphothreonine; by MAPK1.

This sequence belongs to the protein kinase superfamily. TKL Ser/Thr protein kinase family. RAF subfamily. Zn(2+) serves as cofactor. In terms of processing, phosphorylated. As to expression, expressed preferentially in neural tissue.

Its subcellular location is the nucleus. It localises to the cytoplasm. The protein resides in the cell membrane. It carries out the reaction L-seryl-[protein] + ATP = O-phospho-L-seryl-[protein] + ADP + H(+). The catalysed reaction is L-threonyl-[protein] + ATP = O-phospho-L-threonyl-[protein] + ADP + H(+). Its activity is regulated as follows. In quiescent cells, maintained in an inactive state via an intramolecular interaction between the protein kinase and N-terminal domains. Following mitogen-mediated cell activation, binds via its RGB domain to active HRAS (GTP-bound) which releases the inhibitory intramolecular interaction between the two domains. This allows the MAP2K1-mediated dimerization of KSR1 or KSR2, and BRAF which activates BRAF. Its function is as follows. Protein kinase involved in the activation of the MAP signaling cascade. May play a role in transducing specific signals in neural cells. In Coturnix japonica (Japanese quail), this protein is Serine/threonine-protein kinase B-raf.